Here is a 173-residue protein sequence, read N- to C-terminus: Translation initiation factor IF-3 (173 aa).

Belongs to the IF-3 family. In terms of assembly, monomer.

The protein resides in the cytoplasm. IF-3 binds to the 30S ribosomal subunit and shifts the equilibrium between 70S ribosomes and their 50S and 30S subunits in favor of the free subunits, thus enhancing the availability of 30S subunits on which protein synthesis initiation begins. The polypeptide is Translation initiation factor IF-3 (Phenylobacterium zucineum (strain HLK1)).